We begin with the raw amino-acid sequence, 432 residues long: MDDAVGDLKQALPCVAESPAVHVEVLQRSGSTAKKEDIKQSVYRLLKRHNIVFGDYVWTEFDEPFLTRNVQSVSIVDTELKAKDPQPIDLSACTIALHIFQLNEEGPSSENLDEETENIIAASHWVLPAAEFHGLWDSLVYDVEVKSHLLDYVMTTLLFSDKNVDSNLITWNRVVLLHGPPGTGKTSLCKALAQKLTIRLSSRYRYGQLIEINSHSLFSKWFSESGKLVTKMFQKIQDLIDDKEALVFVLIDEVESLTAARNACRAGAEPSDAIRVVNAVLTQIDQIKRHSNVVILTTSNITEKIDVAFVDRADIKQYIGPPSAAAIFKIYLSCLEELMKCQIIYPRQQLLTLRELEMIGFIENNVSKLSLLLSEISRKSEGLSGRVLRKLPFLAHALYIQAPSVTIEGFLQALSLAVDKQFEEKKKLSAHV.

Position 1 is an N-acetylmethionine (M1). 179–186 (GPPGTGKT) contributes to the ATP binding site.

This sequence belongs to the AAA ATPase family. PCH2 subfamily. As to quaternary structure, specifically interacts with the ligand binding domain of the thyroid receptor (TR). This interaction does not require the presence of thyroid hormone for its interaction. Interacts with proteasome subunit PSMA8; to participate in meiosis progression during spermatogenesis.

Plays a key role in chromosome recombination and chromosome structure development during meiosis. Required at early steps in meiotic recombination that leads to non-crossovers pathways. Also needed for efficient completion of homologous synapsis by influencing crossover distribution along the chromosomes affecting both crossovers and non-crossovers pathways. Also required for development of higher-order chromosome structures and is needed for synaptonemal-complex formation. In males, required for efficient synapsis of the sex chromosomes and for sex body formation. Promotes early steps of the DNA double-strand breaks (DSBs) repair process upstream of the assembly of RAD51 complexes. Required for depletion of HORMAD1 and HORMAD2 from synapsed chromosomes. Plays a role in mitotic spindle assembly checkpoint (SAC) activation. The protein is Pachytene checkpoint protein 2 homolog (Trip13) of Rattus norvegicus (Rat).